The chain runs to 234 residues: NAD-dependent protein deacetylase (234 aa).

The region spanning M1–V234 is the Deacetylase sirtuin-type domain. NAD(+) contacts are provided by A23, T27, R35, Q99, I101, D102, H117, T184, S185, N208, and V226. Positions 101 and 102 each coordinate nicotinamide. The Proton acceptor role is filled by H117.

The protein belongs to the sirtuin family. Class U subfamily.

Its subcellular location is the cytoplasm. The enzyme catalyses N(6)-acetyl-L-lysyl-[protein] + NAD(+) + H2O = 2''-O-acetyl-ADP-D-ribose + nicotinamide + L-lysyl-[protein]. Its function is as follows. NAD-dependent protein deacetylase which modulates the activities of several enzymes which are inactive in their acetylated form. The polypeptide is NAD-dependent protein deacetylase (Lactiplantibacillus plantarum (strain ATCC BAA-793 / NCIMB 8826 / WCFS1) (Lactobacillus plantarum)).